The chain runs to 337 residues: UDP-3-O-acylglucosamine N-acyltransferase (337 aa).

Histidine 238 (proton acceptor) is an active-site residue.

Belongs to the transferase hexapeptide repeat family. LpxD subfamily. As to quaternary structure, homotrimer.

The catalysed reaction is a UDP-3-O-[(3R)-3-hydroxyacyl]-alpha-D-glucosamine + a (3R)-hydroxyacyl-[ACP] = a UDP-2-N,3-O-bis[(3R)-3-hydroxyacyl]-alpha-D-glucosamine + holo-[ACP] + H(+). It participates in bacterial outer membrane biogenesis; LPS lipid A biosynthesis. Catalyzes the N-acylation of UDP-3-O-acylglucosamine using 3-hydroxyacyl-ACP as the acyl donor. Is involved in the biosynthesis of lipid A, a phosphorylated glycolipid that anchors the lipopolysaccharide to the outer membrane of the cell. The chain is UDP-3-O-acylglucosamine N-acyltransferase from Xanthomonas oryzae pv. oryzae (strain KACC10331 / KXO85).